Here is a 120-residue protein sequence, read N- to C-terminus: Large ribosomal subunit protein bL19c (120 aa).

It belongs to the bacterial ribosomal protein bL19 family.

The protein localises to the plastid. The protein resides in the chloroplast. The polypeptide is Large ribosomal subunit protein bL19c (Phaeodactylum tricornutum (strain CCAP 1055/1)).